Consider the following 520-residue polypeptide: Membrane-bound glycerophospholipid O-acyltransferase 2 (520 aa).

6 helical membrane passes run 22–42, 61–81, 88–108, 184–204, 237–257, and 264–284; these read PIDQVNFVVCQLFALLAAIWF, TLLGLYLALFCFGWYALHFLV, CIMIIIGVENMHNYCFVFALG, FMGILAGPLCSYKDYITFIEG, LLVCGLSLLFHLTICTTLPVE, and FQATASWPTKIIYLYISLLAA. Residues N342 and H373 contribute to the active site. The next 3 membrane-spanning stretches (helical) occupy residues 366-386, 416-436, and 444-464; these read FILSAIWHGVYPGYYLTFLTG, VITWIVTQVAISYTVVPFVLL, and FYSSWYYCLHILGILVLLLLP.

This sequence belongs to the membrane-bound acyltransferase family. In terms of tissue distribution, expressed in neutrophils.

It is found in the endoplasmic reticulum membrane. It carries out the reaction a 1-acyl-sn-glycero-3-phosphocholine + an acyl-CoA = a 1,2-diacyl-sn-glycero-3-phosphocholine + CoA. It catalyses the reaction a 1-acyl-sn-glycero-3-phosphoethanolamine + an acyl-CoA = a 1,2-diacyl-sn-glycero-3-phosphoethanolamine + CoA. The enzyme catalyses a 1-acyl-sn-glycero-3-phosphate + an acyl-CoA = a 1,2-diacyl-sn-glycero-3-phosphate + CoA. The catalysed reaction is (9Z)-hexadecenoyl-CoA + 1-hexadecanoyl-sn-glycero-3-phosphocholine = 1-hexadecanoyl-2-(9Z-hexadecenoyl)-sn-glycero-3-phosphocholine + CoA. It carries out the reaction 1-hexadecanoyl-sn-glycero-3-phosphoethanolamine + (9Z)-octadecenoyl-CoA = 1-hexadecanoyl-2-(9Z-octadecenoyl)-sn-glycero-3-phosphoethanolamine + CoA. It catalyses the reaction 1-hexadecanoyl-sn-glycero-3-phosphoethanolamine + (9Z)-hexadecenoyl-CoA = 1-hexadecanoyl-2-(9Z)-hexadecenoyl-sn-glycero-3-phosphoethanolamine + CoA. The enzyme catalyses 1-(9Z-octadecenoyl)-sn-glycero-3-phospho-L-serine + hexadecanoyl-CoA = 1-(9Z)-octadecenoyl-2-hexadecanoyl-sn-glycero-3-phosphoserine + CoA. The catalysed reaction is (9Z,12Z)-octadecadienoyl-CoA + 1-hexadecanoyl-sn-glycero-3-phosphocholine = 1-hexadecanoyl-2-(9Z,12Z-octadecadienoyl)-sn-glycero-3-phosphocholine + CoA. It carries out the reaction 1-hexadecanoyl-sn-glycero-3-phosphocholine + (9Z)-octadecenoyl-CoA = 1-hexadecanoyl-2-(9Z-octadecenoyl)-sn-glycero-3-phosphocholine + CoA. It catalyses the reaction 1-hexadecanoyl-sn-glycero-3-phosphate + (9Z)-hexadecenoyl-CoA = 1-hexadecanoyl-2-[(9Z)-hexadec-9-enoyl]-sn-glycero-3-phosphate + CoA. The enzyme catalyses 1-hexadecanoyl-sn-glycero-3-phosphate + (9Z)-octadecenoyl-CoA = 1-hexadecanoyl-2-(9Z-octadecenoyl)-sn-glycero-3-phosphate + CoA. The catalysed reaction is a 1-O-(1Z-alkenyl)-sn-glycero-3-phosphocholine + (9Z)-octadecenoyl-CoA = 1-O-(1Z)-alkenyl-2-(9Z)-octadecenoyl-sn-glycero-3-phosphocholine + CoA. It carries out the reaction a 1-O-(1Z-alkenyl)-sn-glycero-3-phosphoethanolamine + (9Z)-octadecenoyl-CoA = 1-O-(1Z)-alkenyl-2-(9Z)-octadecenoyl-sn-glycero-3-phosphoethanolamine + CoA. It catalyses the reaction 1-octadecanoyl-sn-glycero-3-phosphoethanolamine + (9Z)-octadecenoyl-CoA = 1-octadecanoyl-2-(9Z-octadecenoyl)-sn-glycero-3-phosphoethanolamine + CoA. The enzyme catalyses 1-octadecanoyl-sn-glycero-3-phosphocholine + (9Z)-octadecenoyl-CoA = 1-octadecanoyl-2-(9Z-octadecenoyl)-sn-glycero-3-phosphocholine + CoA. The catalysed reaction is 1-(9Z-octadecenoyl)-sn-glycero-3-phosphoethanolamine + (9Z)-octadecenoyl-CoA = 1,2-di-(9Z-octadecenoyl)-sn-glycero-3-phosphoethanolamine + CoA. It participates in lipid metabolism; phospholipid metabolism. Its activity is regulated as follows. Partially inhibited by thimerosal. In terms of biological role, acyltransferase which catalyzes the transfer of an acyl group from an acyl-CoA to a lysophospholipid leading to the production of a phospholipid and participates in the reacylation step of the phospholipid remodeling pathway also known as the Lands cycle. Catalyzes preferentially the acylation of lysophosphatidylethanolamine (1-acyl-sn-glycero-3-phosphoethanolamine or LPE) and lysophosphatidic acid (LPA) and to a lesser extend lysophosphatidylcholine (LPC) and lysophosphatidylserine (LPS). Prefers oleoyl-CoA as the acyl donor. May be involved in chondrocyte differentiation. This chain is Membrane-bound glycerophospholipid O-acyltransferase 2, found in Homo sapiens (Human).